A 282-amino-acid chain; its full sequence is TPR repeat protein oca3 (282 aa).

TPR repeat units follow at residues 16–50 (IVAL…ALTT), 71–104 (PRVE…DPTH), 139–172 (LEAW…QPFE), and 174–211 (RLFA…CEEY).

The protein resides in the cytoplasm. It is found in the nucleus. May be involved in cell cycle regulation. This Schizosaccharomyces pombe (strain 972 / ATCC 24843) (Fission yeast) protein is TPR repeat protein oca3 (oca3).